The chain runs to 805 residues: Ribosome biogenesis protein ERB1 (805 aa).

Positions 1–105 (MVKGRKSQKA…SDFSEDDTKS (105 aa)) are disordered. Positions 8 to 22 (QKADKVTKAKKRVAD) are enriched in basic and acidic residues. A compositionally biased stretch (acidic residues) spans 23–75 (EVDESESEPELQVEGLIDAEAESEDDESFESAEENASAEEDEEDEEDEEDSDA). Positions 264-382 (RFVPSKNEAK…LRKVPGYTES (119 aa)) are required for interaction with NOP7. The segment at 382-418 (SVRERFERSLDLYLAPRMRKNKLNIDPESLIPELPSP) is required for interaction with YTM1. WD repeat units lie at residues 434-473 (GHEGKIRTLSIDPTGIWLATGSDDGSVRIWEILTGREVYR), 482-522 (NPED…YDIE), 590-632 (VCKK…TQSP), 635-673 (KSKGIIMDAKFHPFKPQLFVCSQRYVRIYDLSQQVLVKK), 676-715 (PGARWLSNIDIHPRGDNLIASSYDKRVLWHDLDLAATPYK), 719-758 (YHDKAVRSTTFHKKLPLFCSAADDGFIHIFHATVYDDMMK), and 775-805 (GHLGVLDTIWHPKEAWLFSAGADNTARMWTT).

The protein belongs to the WD repeat BOP1/ERB1 family. Component of the NOP7 complex, composed of ERB1, NOP7 and YTM1. The complex is held together by ERB1, which interacts with NOP7 via its N-terminal domain and with YTM1 via a high-affinity interaction between the seven-bladed beta-propeller domains of the 2 proteins. The NOP7 complex associates with the 66S pre-ribosome.

It is found in the nucleus. It localises to the nucleolus. The protein localises to the nucleoplasm. Its function is as follows. Component of the NOP7 complex, which is required for maturation of the 25S and 5.8S ribosomal RNAs and formation of the 60S ribosome. This is Ribosome biogenesis protein ERB1 from Candida glabrata (strain ATCC 2001 / BCRC 20586 / JCM 3761 / NBRC 0622 / NRRL Y-65 / CBS 138) (Yeast).